The following is a 303-amino-acid chain: 4-diphosphocytidyl-2-C-methyl-D-erythritol kinase (303 aa).

The active site involves lysine 24. 111–121 (PIASGIGGGSA) serves as a coordination point for ATP. Residue aspartate 153 is part of the active site.

Belongs to the GHMP kinase family. IspE subfamily.

The catalysed reaction is 4-CDP-2-C-methyl-D-erythritol + ATP = 4-CDP-2-C-methyl-D-erythritol 2-phosphate + ADP + H(+). It participates in isoprenoid biosynthesis; isopentenyl diphosphate biosynthesis via DXP pathway; isopentenyl diphosphate from 1-deoxy-D-xylulose 5-phosphate: step 3/6. Functionally, catalyzes the phosphorylation of the position 2 hydroxy group of 4-diphosphocytidyl-2C-methyl-D-erythritol. This chain is 4-diphosphocytidyl-2-C-methyl-D-erythritol kinase, found in Rhizobium johnstonii (strain DSM 114642 / LMG 32736 / 3841) (Rhizobium leguminosarum bv. viciae).